We begin with the raw amino-acid sequence, 301 residues long: Sulfate adenylyltransferase subunit 2 (301 aa).

It belongs to the PAPS reductase family. CysD subfamily. Heterodimer composed of CysD, the smaller subunit, and CysN.

It carries out the reaction sulfate + ATP + H(+) = adenosine 5'-phosphosulfate + diphosphate. It participates in sulfur metabolism; hydrogen sulfide biosynthesis; sulfite from sulfate: step 1/3. In terms of biological role, with CysN forms the ATP sulfurylase (ATPS) that catalyzes the adenylation of sulfate producing adenosine 5'-phosphosulfate (APS) and diphosphate, the first enzymatic step in sulfur assimilation pathway. APS synthesis involves the formation of a high-energy phosphoric-sulfuric acid anhydride bond driven by GTP hydrolysis by CysN coupled to ATP hydrolysis by CysD. In Geobacter metallireducens (strain ATCC 53774 / DSM 7210 / GS-15), this protein is Sulfate adenylyltransferase subunit 2.